The following is a 249-amino-acid chain: 2,3-bisphosphoglycerate-dependent phosphoglycerate mutase (249 aa).

Substrate contacts are provided by residues 9–16, 22–23, arginine 61, 88–91, lysine 99, 115–116, and 184–185; these read RHGQSQWN, TG, ERHY, RR, and GN. The Tele-phosphohistidine intermediate role is filled by histidine 10. Catalysis depends on glutamate 88, which acts as the Proton donor/acceptor.

Belongs to the phosphoglycerate mutase family. BPG-dependent PGAM subfamily. As to quaternary structure, homodimer.

The catalysed reaction is (2R)-2-phosphoglycerate = (2R)-3-phosphoglycerate. It participates in carbohydrate degradation; glycolysis; pyruvate from D-glyceraldehyde 3-phosphate: step 3/5. Functionally, catalyzes the interconversion of 2-phosphoglycerate and 3-phosphoglycerate. The polypeptide is 2,3-bisphosphoglycerate-dependent phosphoglycerate mutase (Xanthomonas euvesicatoria pv. vesicatoria (strain 85-10) (Xanthomonas campestris pv. vesicatoria)).